The following is a 521-amino-acid chain: Aldehyde dehydrogenase, mitochondrial (521 aa).

Residues 1–21 constitute a mitochondrion transit peptide; that stretch reads MLRPAALAAARLVLRQGRRLL. The short motif at 13-28 is the SIFI-degron element; it reads VLRQGRRLLSAAPTQA. Residues Lys56, Lys77, and Lys163 each carry the N6-acetyllysine modification. 266–271 serves as a coordination point for NAD(+); the sequence is GSTEVG. Glu289 (proton acceptor) is an active-site residue. The active-site Nucleophile is the Cys323. N6-acetyllysine is present on residues Lys372, Lys379, Lys387, Lys430, Lys432, Lys445, and Lys455.

Belongs to the aldehyde dehydrogenase family. As to quaternary structure, homotetramer. Post-translationally, in response to mitochondrial stress, the precursor protein is ubiquitinated by the SIFI complex in the cytoplasm before mitochondrial import, leading to its degradation. Within the SIFI complex, UBR4 initiates ubiquitin chain that are further elongated or branched by KCMF1.

The protein localises to the mitochondrion matrix. It carries out the reaction an aldehyde + NAD(+) + H2O = a carboxylate + NADH + 2 H(+). The protein operates within alcohol metabolism; ethanol degradation; acetate from ethanol: step 2/2. Its function is as follows. Required for clearance of cellular formaldehyde, a cytotoxic and carcinogenic metabolite that induces DNA damage. This chain is Aldehyde dehydrogenase, mitochondrial (ALDH2), found in Sus scrofa (Pig).